We begin with the raw amino-acid sequence, 96 residues long: Co-chaperonin GroES (96 aa).

The protein belongs to the GroES chaperonin family. Heptamer of 7 subunits arranged in a ring. Interacts with the chaperonin GroEL.

Its subcellular location is the cytoplasm. Its function is as follows. Together with the chaperonin GroEL, plays an essential role in assisting protein folding. The GroEL-GroES system forms a nano-cage that allows encapsulation of the non-native substrate proteins and provides a physical environment optimized to promote and accelerate protein folding. GroES binds to the apical surface of the GroEL ring, thereby capping the opening of the GroEL channel. The sequence is that of Co-chaperonin GroES from Leptospira interrogans serogroup Icterohaemorrhagiae serovar copenhageni (strain Fiocruz L1-130).